The sequence spans 131 residues: Large ribosomal subunit protein uL18 (131 aa).

The protein belongs to the universal ribosomal protein uL18 family. Part of the 50S ribosomal subunit; part of the 5S rRNA/L5/L18/L25 subcomplex. Contacts the 5S and 23S rRNAs.

Its function is as follows. This is one of the proteins that bind and probably mediate the attachment of the 5S RNA into the large ribosomal subunit, where it forms part of the central protuberance. This is Large ribosomal subunit protein uL18 from Corynebacterium kroppenstedtii (strain DSM 44385 / JCM 11950 / CIP 105744 / CCUG 35717).